Here is a 261-residue protein sequence, read N- to C-terminus: Indole-3-glycerol phosphate synthase (261 aa).

This sequence belongs to the TrpC family.

The catalysed reaction is 1-(2-carboxyphenylamino)-1-deoxy-D-ribulose 5-phosphate + H(+) = (1S,2R)-1-C-(indol-3-yl)glycerol 3-phosphate + CO2 + H2O. It participates in amino-acid biosynthesis; L-tryptophan biosynthesis; L-tryptophan from chorismate: step 4/5. The protein is Indole-3-glycerol phosphate synthase of Campylobacter hominis (strain ATCC BAA-381 / DSM 21671 / CCUG 45161 / LMG 19568 / NCTC 13146 / CH001A).